The following is a 414-amino-acid chain: TAR DNA-binding protein 43 (414 aa).

Glycyl lysine isopeptide (Lys-Gly) (interchain with G-Cter in SUMO2) cross-links involve residues Lys79, Lys84, Lys95, Lys102, and Lys181. RRM domains lie at Ser104–Glu200 and Arg191–Pro262. Ser183 bears the Phosphoserine mark. Residues Asp216–Met414 are interaction with UBQLN2. Over residues Glu261–Gly274 the composition is skewed to basic and acidic residues. Disordered stretches follow at residues Glu261–Gln303 and Ala341–Ser373. Residue Lys263 forms a Glycyl lysine isopeptide (Lys-Gly) (interchain with G-Cter in SUMO2) linkage. Positions Arg275–Gln303 are enriched in gly residues. A Phosphoserine modification is found at Ser292. Arg293 is modified (omega-N-methylarginine). Positions Ser342–Asn358 are enriched in low complexity.

As to quaternary structure, monomer and component of the SFPQ-NONO complex, which is probably a heterotetramer of two 52 kDa (NONO) and two 100 kDa (SFPQ) subunits. NONO is a component of spliceosome and U5.4/6 snRNP complexes. Interacts with CPNE4 (via VWFA domain). Forms heterodimers with PSPC1; this involves formation of a coiled coil domain by helices from both proteins. Part of complex consisting of SFPQ, NONO and MATR3. Part of a complex consisting of SFPQ, NONO and NR5A1. Part of a complex consisting of SFPQ, NONO and TOP1. Interacts with SPI1. Interacts with RNF43. Interacts with PER1 and PER2. Part of the HDP-RNP complex composed of at least HEXIM1, PRKDC, XRCC5, XRCC6, paraspeckle proteins (SFPQ, NONO, PSPC1, RBM14, and MATR3) and NEAT1 RNA. Interacts (via second RRM domain) with WASL; the interaction is direct. Component of a multiprotein complex with WASL and SFPQ. Interacts with ERCC6. Interacts (via DNA-binding domain) with TET1. Post-translationally, hyperphosphorylated. In terms of processing, ubiquitinated.

Its subcellular location is the nucleus. It localises to the nucleolus. The protein resides in the nucleus speckle. It is found in the chromosome. The protein localises to the mitochondrion. Functionally, DNA- and RNA binding protein, involved in several nuclear processes. Binds the conventional octamer sequence in double-stranded DNA. Also binds single-stranded DNA and RNA at a site independent of the duplex site. Involved in pre-mRNA splicing, probably as a heterodimer with SFPQ. Interacts with U5 snRNA, probably by binding to a purine-rich sequence located on the 3' side of U5 snRNA stem 1b. Together with PSPC1, required for the formation of nuclear paraspeckles. The SFPQ-NONO heteromer associated with MATR3 may play a role in nuclear retention of defective RNAs. The SFPQ-NONO heteromer may be involved in DNA unwinding by modulating the function of topoisomerase I/TOP1. The SFPQ-NONO heteromer may be involved in DNA non-homologous end joining (NHEJ) required for double-strand break repair and V(D)J recombination and may stabilize paired DNA ends. In vitro, the complex strongly stimulates DNA end joining, binds directly to the DNA substrates and cooperates with the Ku70/G22P1-Ku80/XRCC5 (Ku) dimer to establish a functional preligation complex. NONO is involved in transcriptional regulation. The SFPQ-NONO-NR5A1 complex binds to the CYP17 promoter and regulates basal and cAMP-dependent transcriptional activity. NONO binds to an enhancer element in long terminal repeats of endogenous intracisternal A particles (IAPs) and activates transcription. Regulates the circadian clock by repressing the transcriptional activator activity of the CLOCK-BMAL1 heterodimer. Important for the functional organization of GABAergic synapses. Plays a specific and important role in the regulation of synaptic RNAs and GPHN/gephyrin scaffold structure, through the regulation of GABRA2 transcript. Plays a key role during neuronal differentiation by recruiting TET1 to genomic loci and thereby regulating 5-hydroxymethylcytosine levels. Plays a role in the regulation of DNA virus-mediated innate immune response by assembling into the HDP-RNP complex, a complex that serves as a platform for IRF3 phosphorylation and subsequent innate immune response activation through the cGAS-STING pathway. This Pongo abelii (Sumatran orangutan) protein is TAR DNA-binding protein 43 (TARDBP).